Here is a 447-residue protein sequence, read N- to C-terminus: Glutamate--tRNA ligase 1 (447 aa).

The short motif at P10–N20 is the 'HIGH' region element. The 'KMSKS' region signature appears at K240 to R244. An ATP-binding site is contributed by K243.

This sequence belongs to the class-I aminoacyl-tRNA synthetase family. Glutamate--tRNA ligase type 1 subfamily. In terms of assembly, monomer.

It is found in the cytoplasm. It catalyses the reaction tRNA(Glu) + L-glutamate + ATP = L-glutamyl-tRNA(Glu) + AMP + diphosphate. Its function is as follows. Catalyzes the attachment of glutamate to tRNA(Glu) in a two-step reaction: glutamate is first activated by ATP to form Glu-AMP and then transferred to the acceptor end of tRNA(Glu). This chain is Glutamate--tRNA ligase 1, found in Rickettsia felis (strain ATCC VR-1525 / URRWXCal2) (Rickettsia azadi).